Consider the following 60-residue polypeptide: Cytotoxin 1 (60 aa).

Intrachain disulfides connect Cys-3/Cys-21, Cys-14/Cys-38, Cys-42/Cys-53, and Cys-54/Cys-59.

Belongs to the three-finger toxin family. Short-chain subfamily. Type IA cytotoxin sub-subfamily. In terms of assembly, monomer in solution; Homodimer and oligomer in the presence of negatively charged lipids forming a pore with a size ranging between 20 and 30 angstroms. As to expression, expressed by the venom gland.

It is found in the secreted. The protein resides in the target cell membrane. Functionally, basic protein that binds to cell membrane and depolarizes cardiomyocytes. This cytotoxin also possesses lytic activity on many other cells, including red blood cells. Interaction with sulfatides in the cell membrane induces pore formation and cell internalization and is responsible for cytotoxicity in cardiomyocytes. It targets the mitochondrial membrane and induces mitochondrial swelling and fragmentation. Inhibits protein kinases C. It binds to the integrin alpha-V/beta-3 with a moderate affinity. The protein is Cytotoxin 1 of Naja pallida (Red spitting cobra).